We begin with the raw amino-acid sequence, 640 residues long: Threonine--tRNA ligase (640 aa).

The TGS domain maps to 1–61 (MPIITLPDGS…ERDATLQIIT (61 aa)). Residues 242-533 (DHRRIGKQLD…LIEHYAGAFP (292 aa)) form a catalytic region. The Zn(2+) site is built by cysteine 333, histidine 384, and histidine 510.

The protein belongs to the class-II aminoacyl-tRNA synthetase family. As to quaternary structure, homodimer. The cofactor is Zn(2+).

The protein resides in the cytoplasm. The catalysed reaction is tRNA(Thr) + L-threonine + ATP = L-threonyl-tRNA(Thr) + AMP + diphosphate + H(+). Its function is as follows. Catalyzes the attachment of threonine to tRNA(Thr) in a two-step reaction: L-threonine is first activated by ATP to form Thr-AMP and then transferred to the acceptor end of tRNA(Thr). Also edits incorrectly charged L-seryl-tRNA(Thr). The polypeptide is Threonine--tRNA ligase (Pseudomonas paraeruginosa (strain DSM 24068 / PA7) (Pseudomonas aeruginosa (strain PA7))).